A 134-amino-acid polypeptide reads, in one-letter code: Mediator of RNA polymerase II transcription subunit 10 (134 aa).

It belongs to the Mediator complex subunit 10 family. In terms of assembly, component of the Mediator complex.

It is found in the nucleus. Its function is as follows. Component of the Mediator complex, a coactivator involved in the regulated transcription of nearly all RNA polymerase II-dependent genes. Mediator functions as a bridge to convey information from gene-specific regulatory proteins to the basal RNA polymerase II transcription machinery. Mediator is recruited to promoters by direct interactions with regulatory proteins and serves as a scaffold for the assembly of a functional preinitiation complex with RNA polymerase II and the general transcription factors. Negatively regulates the Wnt signaling pathway and positively regulates the Nodal signaling pathway. Required for cardiac cushion formation. The chain is Mediator of RNA polymerase II transcription subunit 10 (med10) from Danio rerio (Zebrafish).